The sequence spans 624 residues: Outer dynein arm-docking complex subunit 4 (624 aa).

TPR repeat units lie at residues 11 to 44 (FPSYMAEGERLYLCGEFTKAIQSFTNALHLQSGD), 46 to 78 (NCLVARSKCYLKMGDLEKSLNDAEASLRNDPTF), 79 to 112 (CKGILQKAETLYTMGDFEFALVFYHRGYKLRPDR), 273 to 309 (LKSLEDIDMLLTSGSADGSLQKAEKVLKKVLEWNQEE), 318 to 351 (GNLYSCIGNAQIELGQMVAALQSHRKDLEIAKEH), 358 to 391 (SRALDNIGRVFARVGKFQQAIDTWEEKIPLAKTT), 395 to 428 (TWLFHEIGRCYLELDQAWQAQSYGEKSQQYAEEE), and 435 to 468 (LNASVLVAQAQVKLRDFESAVNNFEKALERAKLV). The interval 511-624 (MSQMDLQGAS…VQKLEKTKEE (114 aa)) is disordered. Basic and acidic residues-rich tracts occupy residues 520-557 (SEKEPLRGREEQERVVKQWERDQESEREATDDEQDRKS), 576-588 (IRRESREIYRRLS), and 595-624 (PSEDGSQKQEKKQAEAAKGEVQKLEKTKEE).

Component of the outer dynein arm-docking complex along with ODAD1, ODAD2, and ODAD3. Interacts with ODAD1; this interaction may facilitate the recruitment and/or attachment of outer dynein arm docking complex proteins, including ODAD1, ODAD3 and ODAD2, to ciliary axonemes. Interacts with components of the IFT complex A, including IFT140, TTC21B/IFT139 and WDR19/IFT144, and the IFT complex B, including IFT46, IFT52 and IFT57. Interacts with CFAP53.

Its subcellular location is the cell projection. It localises to the cilium. The protein resides in the cytoplasm. It is found in the cytoskeleton. The protein localises to the cilium axoneme. Component of the outer dynein arm-docking complex (ODA-DC) that mediates outer dynein arms (ODA) binding onto the doublet microtubule. Plays an essential role for the assembly of ODA-DC and for the docking of ODA in ciliary axoneme. This chain is Outer dynein arm-docking complex subunit 4 (Odad4), found in Mus musculus (Mouse).